Here is a 231-residue protein sequence, read N- to C-terminus: Enolase-phosphatase E1 (231 aa).

It belongs to the HAD-like hydrolase superfamily. MasA/MtnC family. Monomer. Requires Mg(2+) as cofactor.

The catalysed reaction is 5-methylsulfanyl-2,3-dioxopentyl phosphate + H2O = 1,2-dihydroxy-5-(methylsulfanyl)pent-1-en-3-one + phosphate. Its pathway is amino-acid biosynthesis; L-methionine biosynthesis via salvage pathway; L-methionine from S-methyl-5-thio-alpha-D-ribose 1-phosphate: step 3/6. The protein operates within amino-acid biosynthesis; L-methionine biosynthesis via salvage pathway; L-methionine from S-methyl-5-thio-alpha-D-ribose 1-phosphate: step 4/6. In terms of biological role, bifunctional enzyme that catalyzes the enolization of 2,3-diketo-5-methylthiopentyl-1-phosphate (DK-MTP-1-P) into the intermediate 2-hydroxy-3-keto-5-methylthiopentenyl-1-phosphate (HK-MTPenyl-1-P), which is then dephosphorylated to form the acireductone 1,2-dihydroxy-3-keto-5-methylthiopentene (DHK-MTPene). This is Enolase-phosphatase E1 from Stenotrophomonas maltophilia (strain R551-3).